A 456-amino-acid chain; its full sequence is Protein FAM124B (456 aa).

The disordered stretch occupies residues 262–313 (NGCLRGDTHPQDSSLNSVSTQRTLEPRSRRRSRSRRFKVHSLELPQPSGSWE). The span at 272 to 284 (QDSSLNSVSTQRT) shows a compositional bias: polar residues. The segment covering 289–300 (SRRRSRSRRFKV) has biased composition (basic residues).

This sequence belongs to the FAM124 family. Interacts with CHD7 and CHD8. In terms of tissue distribution, expressed strongly in lung, at slightly lower levels in heart, kidney, brain and testis, and weakly in liver (at protein level). In brain, highly expressed in cortex, hippocampus, dentate gyrus, caudate putamen and cerebellum (at protein level).

Its subcellular location is the nucleus. This Mus musculus (Mouse) protein is Protein FAM124B (Fam124b).